The chain runs to 122 residues: Acidic phospholipase A2 (122 aa).

Intrachain disulfides connect Cys26–Cys115, Cys28–Cys44, Cys43–Cys95, Cys49–Cys122, Cys50–Cys88, Cys57–Cys81, and Cys75–Cys86. Ca(2+) is bound by residues Tyr27, Gly29, and Gly31. Residue His47 is part of the active site. Asp48 is a Ca(2+) binding site. Asp89 is an active-site residue.

Belongs to the phospholipase A2 family. Group II subfamily. D49 sub-subfamily. In terms of assembly, monomer. Ca(2+) serves as cofactor. Expressed by the venom gland.

Its subcellular location is the secreted. The catalysed reaction is a 1,2-diacyl-sn-glycero-3-phosphocholine + H2O = a 1-acyl-sn-glycero-3-phosphocholine + a fatty acid + H(+). In terms of biological role, PLA2 catalyzes the calcium-dependent hydrolysis of the 2-acyl groups in 3-sn-phosphoglycerides. The chain is Acidic phospholipase A2 from Gloydius blomhoffii (Mamushi).